A 172-amino-acid polypeptide reads, in one-letter code: Shikimate kinase (172 aa).

12–17 (GSGKTS) contributes to the ATP binding site. A Mg(2+)-binding site is contributed by Thr-16. Substrate contacts are provided by Asp-34, Arg-58, and Gly-81. Position 122 (Arg-122) interacts with ATP. Arg-139 provides a ligand contact to substrate.

It belongs to the shikimate kinase family. As to quaternary structure, monomer. Mg(2+) serves as cofactor.

The protein resides in the cytoplasm. The enzyme catalyses shikimate + ATP = 3-phosphoshikimate + ADP + H(+). The protein operates within metabolic intermediate biosynthesis; chorismate biosynthesis; chorismate from D-erythrose 4-phosphate and phosphoenolpyruvate: step 5/7. Functionally, catalyzes the specific phosphorylation of the 3-hydroxyl group of shikimic acid using ATP as a cosubstrate. This is Shikimate kinase from Dictyoglomus turgidum (strain DSM 6724 / Z-1310).